The chain runs to 548 residues: uncharacterized protein (548 aa).

Positions 1–24 are cleaved as a signal peptide; that stretch reads MKKATKLLLSILPISSISFLSVVS. Residue cysteine 25 is the site of N-palmitoyl cysteine attachment. Cysteine 25 carries the S-diacylglycerol cysteine lipid modification. The disordered stretch occupies residues 26–129; the sequence is STRNSNAKQP…NNQHADQPNI (104 aa). The span at 34–44 shows a compositional bias: basic and acidic residues; sequence QPDKKPEKPNE. Residues 58 to 78 are compositionally biased toward low complexity; that stretch reads PTNNNNNSNNNSNSNNNKPGS. The span at 83–109 shows a compositional bias: basic and acidic residues; it reads ENKDPSKSEETPEKPERDPKKPDKQPQ. A compositionally biased stretch (low complexity) spans 110–128; the sequence is GDDPNNHQPHNNQHADQPN.

The protein belongs to the mycoplasma p72 lipoprotein family.

It is found in the cell membrane. This is an uncharacterized protein from Mycoplasma mycoides subsp. mycoides SC (strain CCUG 32753 / NCTC 10114 / PG1).